Here is a 473-residue protein sequence, read N- to C-terminus: MASESGKLWGGRFVGTVDPIMEKFNSSITYDRHLWEADVQGSKAYSRGLEKAGLLTKAEMDQILHGLDKVAEEWAQGTFKLNPNDEDIHTANERRLKELIGETAGKLHTGRSRNDQVVTDLRLWMRQNCSMLSALLCELIRTMVDRAEAERDVLFPGYTHLQRAQPIRWSHWILSHAVALTRDSERLLEVRKRINVLPLGSGAIAGNPLGVDRELLRAELDFGAITLNSMDATSERDFVAEFLFWASLCMTHLSRMAEDLILYGTKEFSFVQLSDAYSTGSSLMPQKKNPDSLELIRSKAGRVFGRCAGLLMTLKGLPSTYNKDLQEDKEAVFEVSDTMSAVLQVATGVISTLQIHRENMGRALSPDMLATDLAYYLVRKGMPFRQAHEASGKAVFMAETKGVALNQLSLQELQTISPLFSGDVSHVWDYGHSVEQYEALGGTARSSVDWQIGQLRALLRAQQTESPPHASPK.

At alanine 2 the chain carries N-acetylalanine. The residue at position 7 (lysine 7) is an N6-acetyllysine. A 2-(N(omega)-L-arginino)succinate-binding site is contributed by serine 27. At lysine 69 the chain carries N6-acetyllysine. 2-(N(omega)-L-arginino)succinate-binding residues include asparagine 114 and threonine 159. Catalysis depends on histidine 160, which acts as the Proton acceptor. Serine 281 (proton donor) is an active-site residue. At lysine 288 the chain carries N6-acetyllysine. Residues asparagine 289, tyrosine 321, glutamine 326, and lysine 329 each coordinate 2-(N(omega)-L-arginino)succinate.

Belongs to the lyase 1 family. Argininosuccinate lyase subfamily. Homotetramer. Forms tissue-specific complexes with ASS1, SLC7A1, HSP90AA1 and nitric oxide synthase NOS1, NOS2 or NOS3; the complex maintenance is independent of ASL catalytic function. Post-translationally, acetylation modifies enzyme activity in response to alterations of extracellular nutrient availability. Acetylation increased with trichostin A (TSA) or with nicotinamide (NAM). Glucose increases acetylation by about a factor of 3 with decreasing enzyme activity. Acetylation on Lys-288 is decreased on the addition of extra amino acids resulting in activation of enzyme activity.

It carries out the reaction 2-(N(omega)-L-arginino)succinate = fumarate + L-arginine. It functions in the pathway amino-acid biosynthesis; L-arginine biosynthesis; L-arginine from L-ornithine and carbamoyl phosphate: step 3/3. Its pathway is nitrogen metabolism; urea cycle; L-arginine and fumarate from (N(omega)-L-arginino)succinate: step 1/1. Its activity is regulated as follows. Enzyme activity is regulated by acetylation. In terms of biological role, catalyzes the reversible cleavage of L-argininosuccinate to fumarate and L-arginine, an intermediate step reaction in the urea cycle mostly providing for hepatic nitrogen detoxification into excretable urea as well as de novo L-arginine synthesis in nonhepatic tissues. Essential regulator of intracellular and extracellular L-arginine pools. As part of citrulline-nitric oxide cycle, forms tissue-specific multiprotein complexes with argininosuccinate synthase ASS1, transport protein SLC7A1 and nitric oxide synthase NOS1, NOS2 or NOS3, allowing for cell-autonomous L-arginine synthesis while channeling extracellular L-arginine to nitric oxide synthesis pathway. This is Argininosuccinate lyase (ASL) from Bos taurus (Bovine).